Here is a 320-residue protein sequence, read N- to C-terminus: Cytochrome f (320 aa).

The N-terminal stretch at 1–35 (MQTRNAFSWIKKEITRSISVLLMIYIITRAPISNA) is a signal peptide. The heme site is built by tyrosine 36, cysteine 56, cysteine 59, and histidine 60. A helical transmembrane segment spans residues 286 to 305 (VQGLLLFLASIILAQILLVL).

Belongs to the cytochrome f family. As to quaternary structure, the 4 large subunits of the cytochrome b6-f complex are cytochrome b6, subunit IV (17 kDa polypeptide, petD), cytochrome f and the Rieske protein, while the 4 small subunits are PetG, PetL, PetM and PetN. The complex functions as a dimer. The cofactor is heme.

The protein localises to the plastid. It is found in the chloroplast thylakoid membrane. In terms of biological role, component of the cytochrome b6-f complex, which mediates electron transfer between photosystem II (PSII) and photosystem I (PSI), cyclic electron flow around PSI, and state transitions. The polypeptide is Cytochrome f (petA) (Pisum sativum (Garden pea)).